Consider the following 253-residue polypeptide: MLKTRVIPCLDVADGRVVKGVNFVDLRDAGDPVEAARAYDAAGADEICFLDIHATHENRGTMYDLVTRTAEACFVPLTVGGGVRSHQDVRALLLAGADKVSFNSAAVANPDVIAEAADRFGSQCIVCAIDAKTVAPGKWEIFTHGGRKPTGIDAVEFARTVAAKGAGEILLTSMDRDGTKSGFNIPLTRAVADAVTIPVIASGGVGMLEHLAEGVLEGHASAVLAASIFHFGTFTVREAKEHLAAAGIPVRLT.

Catalysis depends on residues Asp11 and Asp130.

The protein belongs to the HisA/HisF family. In terms of assembly, heterodimer of HisH and HisF.

The protein resides in the cytoplasm. The catalysed reaction is 5-[(5-phospho-1-deoxy-D-ribulos-1-ylimino)methylamino]-1-(5-phospho-beta-D-ribosyl)imidazole-4-carboxamide + L-glutamine = D-erythro-1-(imidazol-4-yl)glycerol 3-phosphate + 5-amino-1-(5-phospho-beta-D-ribosyl)imidazole-4-carboxamide + L-glutamate + H(+). The protein operates within amino-acid biosynthesis; L-histidine biosynthesis; L-histidine from 5-phospho-alpha-D-ribose 1-diphosphate: step 5/9. IGPS catalyzes the conversion of PRFAR and glutamine to IGP, AICAR and glutamate. The HisF subunit catalyzes the cyclization activity that produces IGP and AICAR from PRFAR using the ammonia provided by the HisH subunit. This Paracoccus denitrificans (strain Pd 1222) protein is Imidazole glycerol phosphate synthase subunit HisF.